Consider the following 819-residue polypeptide: THO complex subunit 5B (819 aa).

Positions 285-332 are disordered; it reads ARQQSRKDSGMSSNTESSRLEDDGPDDDDDGQRRRKRPKKLTSKEGSD.

It belongs to the THOC5 family. In terms of assembly, component of the THO complex, which is composed of THO1, THO2, THO3, THO5, THO6 and THO7.

It is found in the nucleus. In terms of biological role, acts as a component of the THO subcomplex of the TREX complex which is thought to couple mRNA transcription, processing and nuclear export. The sequence is that of THO complex subunit 5B (THO5B) from Arabidopsis thaliana (Mouse-ear cress).